Here is a 137-residue protein sequence, read N- to C-terminus: Sporulation-specific cell division protein SsgB (137 aa).

It belongs to the SsgA family. As to quaternary structure, interacts with SsgA. Interacts with FtsZ (via N-terminus).

The protein localises to the cell septum. Its function is as follows. Involved in sporulation-specific cell division. Required for early stages of sporulation. Important in the process of growth cessation prior to sporulation-specific cell division. Recruits cell division protein FtsZ to the future septum sites and tethers the contractile ring structure (Z ring) to the cytoplasmic membrane during sporulation. Stimulates polymerization and filament length of FtsZ in vitro. In Streptomyces coelicolor (strain ATCC BAA-471 / A3(2) / M145), this protein is Sporulation-specific cell division protein SsgB.